Here is a 299-residue protein sequence, read N- to C-terminus: Ribosomal protein L11 methyltransferase (299 aa).

The S-adenosyl-L-methionine site is built by threonine 149, glycine 170, aspartate 192, and asparagine 234.

The protein belongs to the methyltransferase superfamily. PrmA family.

The protein localises to the cytoplasm. The enzyme catalyses L-lysyl-[protein] + 3 S-adenosyl-L-methionine = N(6),N(6),N(6)-trimethyl-L-lysyl-[protein] + 3 S-adenosyl-L-homocysteine + 3 H(+). Its function is as follows. Methylates ribosomal protein L11. This Chromohalobacter salexigens (strain ATCC BAA-138 / DSM 3043 / CIP 106854 / NCIMB 13768 / 1H11) protein is Ribosomal protein L11 methyltransferase.